Reading from the N-terminus, the 101-residue chain is Putative defensin-like protein 86 (101 aa).

Residues 1-27 form the signal peptide; the sequence is MAITKMSSLIILSLMMLTFIYIPMISG. Intrachain disulfides connect cysteine 35/cysteine 71, cysteine 39/cysteine 59, cysteine 45/cysteine 69, and cysteine 49/cysteine 70.

It belongs to the DEFL family.

The protein resides in the secreted. This chain is Putative defensin-like protein 86 (LCR82), found in Arabidopsis thaliana (Mouse-ear cress).